The sequence spans 143 residues: Large ribosomal subunit protein uL13 (143 aa).

It belongs to the universal ribosomal protein uL13 family. In terms of assembly, part of the 50S ribosomal subunit.

In terms of biological role, this protein is one of the early assembly proteins of the 50S ribosomal subunit, although it is not seen to bind rRNA by itself. It is important during the early stages of 50S assembly. This Dichelobacter nodosus (strain VCS1703A) protein is Large ribosomal subunit protein uL13.